A 250-amino-acid polypeptide reads, in one-letter code: Adenosylcobinamide-GDP ribazoletransferase (250 aa).

6 consecutive transmembrane segments (helical) span residues 33–53 (IASY…LFYI), 63–83 (IVMT…HIDG), 109–129 (LGTN…LFLT), 137–157 (LTAL…SMMI), 180–200 (FAIA…LAVF), and 203–223 (ILTI…LRIG).

It belongs to the CobS family. The cofactor is Mg(2+).

It is found in the cell membrane. It carries out the reaction alpha-ribazole + adenosylcob(III)inamide-GDP = adenosylcob(III)alamin + GMP + H(+). It catalyses the reaction alpha-ribazole 5'-phosphate + adenosylcob(III)inamide-GDP = adenosylcob(III)alamin 5'-phosphate + GMP + H(+). It functions in the pathway cofactor biosynthesis; adenosylcobalamin biosynthesis; adenosylcobalamin from cob(II)yrinate a,c-diamide: step 7/7. Its function is as follows. Joins adenosylcobinamide-GDP and alpha-ribazole to generate adenosylcobalamin (Ado-cobalamin). Also synthesizes adenosylcobalamin 5'-phosphate from adenosylcobinamide-GDP and alpha-ribazole 5'-phosphate. This is Adenosylcobinamide-GDP ribazoletransferase from Thermoanaerobacter sp. (strain X514).